The chain runs to 216 residues: Probable chemoreceptor glutamine deamidase CheD (216 aa).

The protein belongs to the CheD family.

It carries out the reaction L-glutaminyl-[protein] + H2O = L-glutamyl-[protein] + NH4(+). Functionally, probably deamidates glutamine residues to glutamate on methyl-accepting chemotaxis receptors (MCPs), playing an important role in chemotaxis. The sequence is that of Probable chemoreceptor glutamine deamidase CheD from Halorhodospira halophila (strain DSM 244 / SL1) (Ectothiorhodospira halophila (strain DSM 244 / SL1)).